A 454-amino-acid chain; its full sequence is Neuronal acetylcholine receptor subunit alpha-5 (454 aa).

Positions 1–26 (MPLRARSRKPGAGPAARAPQAGVSEP) are disordered. An N-terminal signal peptide occupies residues 1–29 (MPLRARSRKPGAGPAARAPQAGVSEPSFV). Residues 10 to 22 (PGAGPAARAPQAG) show a composition bias toward low complexity. Residues 30-240 (AKSEDRLFKH…IIRRLPLFYT (211 aa)) are Extracellular-facing. Residues asparagine 55, asparagine 169, and asparagine 215 are each glycosylated (N-linked (GlcNAc...) asparagine). A disulfide bond links cysteine 156 and cysteine 170. A disulfide bond links cysteine 220 and cysteine 221. Transmembrane regions (helical) follow at residues 241–261 (LFLI…FYLP), 270–290 (LCTS…EIIP), and 303–323 (LVFT…AINI). Over 324-416 (HHRSSSTHNA…KFIAQVLDRM (93 aa)) the chain is Cytoplasmic. The helical transmembrane segment at 417–437 (FLWAFLLVSIIGSLVLFIPVI) threads the bilayer. Residues 438-454 (HKWASIIVPVHIGSTNT) lie on the Extracellular side of the membrane.

The protein belongs to the ligand-gated ion channel (TC 1.A.9) family. Acetylcholine receptor (TC 1.A.9.1) subfamily. Alpha-5/CHRNA5 sub-subfamily. As to quaternary structure, neuronal AChR that forms heteropentamers composed of two different type of subunits: alpha and non-alpha (beta). CHRNA5/alpha-5 subunit is only able to form functional nAChRs when co-assembled with another alpha subunit, can be combined to CHRNA4/alpha-4 or CHRNA3/alpha-3 and CHRNB4/beta-4 or CHRNB2/beta-2 to give rise to functional receptors. Interacts with LYPD6.

The protein resides in the synaptic cell membrane. It is found in the cell membrane. It carries out the reaction Ca(2+)(in) = Ca(2+)(out). The enzyme catalyses K(+)(in) = K(+)(out). The catalysed reaction is Na(+)(in) = Na(+)(out). With respect to regulation, activated by a myriad of ligands such as acetylcholine, cytisine, nicotine, choline and epibatidine. In terms of biological role, component of neuronal acetylcholine receptors (nAChRs) that function as pentameric, ligand-gated cation channels with high calcium permeability among other activities. nAChRs are excitatory neurotrasnmitter receptors formed by a collection of nAChR subunits known to mediate synaptic transmission in the nervous system and the neuromuscular junction. Each nAchR subunit confers differential attributes to channel properties, including activation, deactivation and desensitization kinetics, pH sensitivity, cation permeability, and binding to allosteric modulators. Has an accessory rather than functional role and is only able to form functional nAChRs when co-assembled with another beta subunit. Participates in pentameric assemblies along with CHRNA3, CHRNA4, CHRNB2 and CHRNB4. Increases receptor sensitivity to acetylcholine and nicotine when associated with CHRNA4 and CHRNB2. Plays a role in nicotine addiction. The sequence is that of Neuronal acetylcholine receptor subunit alpha-5 (CHRNA5) from Gallus gallus (Chicken).